We begin with the raw amino-acid sequence, 83 residues long: Non-muscle caldesmon (83 aa).

Composition is skewed to basic and acidic residues over residues 1 to 44 and 62 to 76; these read QTSE…KEEK and NQLK…KESK. The interval 1-63 is myosin and calmodulin-binding; the sequence is QTSEKEGRSE…PKPGSIEENQ (63 aa). Positions 1 to 83 are disordered; that stretch reads QTSEKEGRSE…ESKNILSLCL (83 aa).

In terms of processing, in non-muscle cells, phosphorylation by CDC2 during mitosis causes caldesmon to dissociate from microfilaments. Phosphorylation reduces caldesmon binding to actin, myosin, and calmodulin as well as its inhibition of actomyosin ATPase activity. Phosphorylation also occurs in both quiescent and dividing smooth muscle cells with similar effects on the interaction with actin and calmodulin and on microfilaments reorganization.

It localises to the cytoplasm. The protein localises to the cytoskeleton. Its subcellular location is the myofibril. The protein resides in the stress fiber. Its function is as follows. Actin- and myosin-binding protein implicated in the regulation of actomyosin interactions in smooth muscle and nonmuscle cells (could act as a bridge between myosin and actin filaments). Stimulates actin binding of tropomyosin which increases the stabilization of actin filament structure. In muscle tissues, inhibits the actomyosin ATPase by binding to F-actin. This inhibition is attenuated by calcium-calmodulin and is potentiated by tropomyosin. Interacts with actin, myosin, two molecules of tropomyosin and with calmodulin. Also plays an essential role during cellular mitosis and receptor capping. This chain is Non-muscle caldesmon (CALD1), found in Bos taurus (Bovine).